The chain runs to 309 residues: Protease HtpX homolog (309 aa).

The next 2 membrane-spanning stretches (helical) occupy residues 7 to 27 and 29 to 49; these read TTVLLAAMTALMMIIGQMLGG and QGMMIALIFAGVMNFASYWYS. His131 contacts Zn(2+). Glu132 is a catalytic residue. A Zn(2+)-binding site is contributed by His135. A run of 2 helical transmembrane segments spans residues 141–161 and 182–202; these read ILIGTIAATMAGAIMMLASMA and IGLIALSIIAPMAAMVIQMAI. Glu207 is a Zn(2+) binding site. Positions 278 to 309 are disordered; that stretch reads RHGSDSGTGNRDSSIRRRNMNTEAKAAWDRLR.

It belongs to the peptidase M48B family. Zn(2+) serves as cofactor.

Its subcellular location is the cell inner membrane. This is Protease HtpX homolog from Desulforapulum autotrophicum (strain ATCC 43914 / DSM 3382 / VKM B-1955 / HRM2) (Desulfobacterium autotrophicum).